The primary structure comprises 87 residues: Neurotoxin LmNaTx64.1 (87 aa).

The first 18 residues, 1 to 18 (MKILFLIILTAFFIGVHC), serve as a signal peptide directing secretion. An LCN-type CS-alpha/beta domain is found at 19–85 (KHGYPIIRAG…TWSRATNKCK (67 aa)). 4 disulfides stabilise this stretch: cysteine 33/cysteine 84, cysteine 37/cysteine 58, cysteine 44/cysteine 65, and cysteine 48/cysteine 67. Cysteine 84 is modified (cysteine amide).

The protein belongs to the long (4 C-C) scorpion toxin superfamily. Sodium channel inhibitor family. Beta subfamily. Expressed by the venom gland.

It localises to the secreted. In terms of biological role, binds voltage-independently at site-4 of sodium channels (Nav) and shift the voltage of activation toward more negative potentials thereby affecting sodium channel activation and promoting spontaneous and repetitive firing. The protein is Neurotoxin LmNaTx64.1 of Lychas mucronatus (Chinese swimming scorpion).